The sequence spans 225 residues: PKHD-type hydroxylase YbiX (225 aa).

The 100-residue stretch at 78–177 (TLSTPLFNRY…RVASFMWIQS (100 aa)) folds into the Fe2OG dioxygenase domain. 3 residues coordinate Fe cation: H96, D98, and H158. Residue R168 participates in 2-oxoglutarate binding.

Requires Fe(2+) as cofactor. The cofactor is L-ascorbate.

The sequence is that of PKHD-type hydroxylase YbiX from Shigella dysenteriae serotype 1 (strain Sd197).